We begin with the raw amino-acid sequence, 309 residues long: Olfactory receptor 1A1 (309 aa).

The Extracellular portion of the chain corresponds to 1 to 25 (MRENNQSSTLEFILLGVTGQQEQED). An N-linked (GlcNAc...) asparagine glycan is attached at Asn-5. A helical transmembrane segment spans residues 26 to 49 (FFYILFLFIYPITLIGNLLIVLAI). At 50 to 57 (CSDVRLHN) the chain is on the cytoplasmic side. The chain crosses the membrane as a helical span at residues 58–79 (PMYFLLANLSLVDIFFSSVTIP). The Extracellular portion of the chain corresponds to 80-100 (KMLANHLLGSKSISFGGCLTQ). A disulfide bridge links Cys-97 with Cys-189. A helical membrane pass occupies residues 101–120 (MYFMIALGNTDSYILAAMAY). Over 121-139 (DRAVAISRPLHYTTIMSPR) the chain is Cytoplasmic. The helical transmembrane segment at 140–158 (SCIWLIAGSWVIGNANALP) threads the bilayer. At 159–195 (HTLLTASLSFCGNQEVANFYCDITPLLKLSCSDIHFH) the chain is on the extracellular side. Residues 196 to 218 (VKMMYLGVGIFSVPLLCIIVSYI) form a helical membrane-spanning segment. Over 219 to 235 (RVFSTVFQVPSTKGVLK) the chain is Cytoplasmic. Residues 236–258 (AFSTCGSHLTVVSLYYGTVMGTY) form a helical membrane-spanning segment. Residues 259-270 (FRPLTNYSLKDA) lie on the Extracellular side of the membrane. N-linked (GlcNAc...) asparagine glycosylation is present at Asn-264. The chain crosses the membrane as a helical span at residues 271–290 (VITVMYTAVTPMLNPFIYSL). Over 291-309 (RNRDMKAALRKLFNKRISS) the chain is Cytoplasmic.

Belongs to the G-protein coupled receptor 1 family.

The protein resides in the cell membrane. Odorant receptor. This Homo sapiens (Human) protein is Olfactory receptor 1A1 (OR1A1).